A 68-amino-acid polypeptide reads, in one-letter code: Peptide Hp1412 (68 aa).

Positions 1–23 (MKTHFAIFLITLFLFQMFSQSDA) are cleaved as a signal peptide. Cys36 is subject to Cysteine amide. A propeptide spanning residues 40–68 (GLSDLYDLDEMFDGEISQADIDFLKELMR) is cleaved from the precursor.

The protein belongs to the non-disulfide-bridged peptide (NDBP) superfamily. Short antimicrobial peptide (group 4) family. In terms of tissue distribution, expressed by the venom gland.

It localises to the secreted. The protein resides in the target cell membrane. Amphipathic peptide with antimicrobial activity. The sequence is that of Peptide Hp1412 from Heterometrus petersii (Asian forest scorpion).